The chain runs to 258 residues: L-fucose dehydrogenase (258 aa).

Residues Ser17, Ile19, Arg39, His40, Glu63, Leu64, and Asn90 each contribute to the NADP(+) site. Beta-L-fucose contacts are provided by Asn94, Ser140, Lys141, Gln147, and Tyr153. Residues Tyr153 and Lys157 each contribute to the NADP(+) site. Tyr153 acts as the Proton acceptor in catalysis. Positions 184 and 185 each coordinate beta-L-fucose. NADP(+) contacts are provided by Val186 and Thr188.

Belongs to the short-chain dehydrogenases/reductases (SDR) family. Homotetramer; dimer of dimers.

It carries out the reaction beta-L-fucose + NADP(+) = L-fucono-1,5-lactone + NADPH + H(+). It catalyses the reaction D-arabinose + NADP(+) = D-arabinono-1,5-lactone + NADPH + H(+). The protein operates within carbohydrate degradation; L-fucose degradation. In terms of biological role, L-fucose dehydrogenase involved in an L-fucose degradation pathway. Catalyzes the oxidation of L-fucose to L-fucono-1,5-lactone. Can also act on D-arabinose, with lower catalytic efficiency, and has weak activity with L-galactose and 4-deoxy-L-fucose. Shows a preference for NADP(+) over NAD(+). This chain is L-fucose dehydrogenase, found in Burkholderia multivorans (strain ATCC 17616 / 249).